The sequence spans 250 residues: NADH-quinone oxidoreductase subunit C (250 aa).

Belongs to the complex I 30 kDa subunit family. In terms of assembly, NDH-1 is composed of 14 different subunits. Subunits NuoB, C, D, E, F, and G constitute the peripheral sector of the complex.

It is found in the cell inner membrane. It carries out the reaction a quinone + NADH + 5 H(+)(in) = a quinol + NAD(+) + 4 H(+)(out). Its function is as follows. NDH-1 shuttles electrons from NADH, via FMN and iron-sulfur (Fe-S) centers, to quinones in the respiratory chain. The immediate electron acceptor for the enzyme in this species is believed to be ubiquinone. Couples the redox reaction to proton translocation (for every two electrons transferred, four hydrogen ions are translocated across the cytoplasmic membrane), and thus conserves the redox energy in a proton gradient. This Xanthomonas euvesicatoria pv. vesicatoria (strain 85-10) (Xanthomonas campestris pv. vesicatoria) protein is NADH-quinone oxidoreductase subunit C.